We begin with the raw amino-acid sequence, 618 residues long: Glutamine--fructose-6-phosphate aminotransferase [isomerizing] (618 aa).

The active-site Nucleophile; for GATase activity is the C2. The 225-residue stretch at 2 to 226 folds into the Glutamine amidotransferase type-2 domain; sequence CGIVGYAGRN…DFETAVLSPT (225 aa). Positions 69 to 94 are disordered; the sequence is HTRWATHGRPSTKNAHPHNSGGNPGK. SIS domains follow at residues 295–434 and 467–608; these read SEDE…VRDR and CAEG…IDKP. K613 serves as the catalytic For Fru-6P isomerization activity.

In terms of assembly, homodimer.

It localises to the cytoplasm. It catalyses the reaction D-fructose 6-phosphate + L-glutamine = D-glucosamine 6-phosphate + L-glutamate. Catalyzes the first step in hexosamine metabolism, converting fructose-6P into glucosamine-6P using glutamine as a nitrogen source. The polypeptide is Glutamine--fructose-6-phosphate aminotransferase [isomerizing] (Methanosarcina acetivorans (strain ATCC 35395 / DSM 2834 / JCM 12185 / C2A)).